Reading from the N-terminus, the 149-residue chain is MSVSLLRKGLDLLREERSGAESSSKKRNSSSKPKPCLSSSKTGMRKQLRRLKQQGLRHDQKATAKGRVIRSAVEEFKKQSAKDHLQQNLQYMLDSSSVTSKEVVDKILKQNRGRKAKDIEIKQHRQIKEKSVFSDADFKRFELEYFGSK.

The disordered stretch occupies residues 1–64 (MSVSLLRKGL…GLRHDQKATA (64 aa)). Basic and acidic residues predominate over residues 8–19 (KGLDLLREERSG). The span at 30-41 (SSKPKPCLSSSK) shows a compositional bias: low complexity. Residues 43-52 (GMRKQLRRLK) show a composition bias toward basic residues.

The protein belongs to the AROS family. Part of the small subunit (SSU) processome, composed of more than 70 proteins and the RNA chaperone small nucleolar RNA (snoRNA) U3.

The protein resides in the nucleus. It localises to the nucleolus. Part of the small subunit (SSU) processome, first precursor of the small eukaryotic ribosomal subunit. During the assembly of the SSU processome in the nucleolus, many ribosome biogenesis factors, an RNA chaperone and ribosomal proteins associate with the nascent pre-rRNA and work in concert to generate RNA folding, modifications, rearrangements and cleavage as well as targeted degradation of pre-ribosomal RNA by the RNA exosome. Acts as a chaperone that specifically mediates the integration of RPS19 in state post-A1. Direct regulator of SIRT1. The protein is Active regulator of SIRT1 (rps19bp1) of Xenopus tropicalis (Western clawed frog).